The following is a 461-amino-acid chain: Ufm1-specific protease 2 (461 aa).

Catalysis depends on residues cysteine 294, aspartate 418, and histidine 420.

Belongs to the peptidase C78 family. As to expression, expressed at high level in brain, kidney, stomach, skeletal muscle, liver, pancreas, spleen and testis.

It is found in the endoplasmic reticulum. The protein resides in the cytoplasm. Its subcellular location is the nucleus. Its function is as follows. Thiol-dependent isopeptidase that specifically cleaves UFM1, a ubiquitin-like modifier protein, from conjugated proteins, such as CD274/PD-L1, CYB5R3, DDRGK1, MRE11, RPL26/uL24, TRIP4 and RPL26/uL24. While it is also able to mediate the processing of UFM1 precursors, a prerequisite for conjugation reactions, UFSP2 mainly acts as a protein deUFMylase that mediates deconjugation of UFM1 from target proteins. Mediates deUFMylation of RPL26/uL24, a critical step to release the UFM1 ribosome E3 ligase (UREL) complex during the recycling of 60S ribosome subunits from the endoplasmic reticulum. Catalyzes deUFMylation of TRIP4, regulating intracellular nuclear receptors transactivation and thereby regulate cell proliferation and differentiation. This Mus musculus (Mouse) protein is Ufm1-specific protease 2.